The primary structure comprises 287 residues: Phosphatidylserine decarboxylase proenzyme (287 aa).

Residues D90, H147, and S253 each act as charge relay system; for autoendoproteolytic cleavage activity in the active site. The active-site Schiff-base intermediate with substrate; via pyruvic acid; for decarboxylase activity is S253. The residue at position 253 (S253) is a Pyruvic acid (Ser); by autocatalysis.

The protein belongs to the phosphatidylserine decarboxylase family. PSD-B subfamily. Prokaryotic type I sub-subfamily. As to quaternary structure, heterodimer of a large membrane-associated beta subunit and a small pyruvoyl-containing alpha subunit. Pyruvate serves as cofactor. Post-translationally, is synthesized initially as an inactive proenzyme. Formation of the active enzyme involves a self-maturation process in which the active site pyruvoyl group is generated from an internal serine residue via an autocatalytic post-translational modification. Two non-identical subunits are generated from the proenzyme in this reaction, and the pyruvate is formed at the N-terminus of the alpha chain, which is derived from the carboxyl end of the proenzyme. The autoendoproteolytic cleavage occurs by a canonical serine protease mechanism, in which the side chain hydroxyl group of the serine supplies its oxygen atom to form the C-terminus of the beta chain, while the remainder of the serine residue undergoes an oxidative deamination to produce ammonia and the pyruvoyl prosthetic group on the alpha chain. During this reaction, the Ser that is part of the protease active site of the proenzyme becomes the pyruvoyl prosthetic group, which constitutes an essential element of the active site of the mature decarboxylase.

Its subcellular location is the cell membrane. The catalysed reaction is a 1,2-diacyl-sn-glycero-3-phospho-L-serine + H(+) = a 1,2-diacyl-sn-glycero-3-phosphoethanolamine + CO2. The protein operates within phospholipid metabolism; phosphatidylethanolamine biosynthesis; phosphatidylethanolamine from CDP-diacylglycerol: step 2/2. In terms of biological role, catalyzes the formation of phosphatidylethanolamine (PtdEtn) from phosphatidylserine (PtdSer). The polypeptide is Phosphatidylserine decarboxylase proenzyme (Aliivibrio salmonicida (strain LFI1238) (Vibrio salmonicida (strain LFI1238))).